The sequence spans 493 residues: Amino acid permease 2 (493 aa).

At Met1–Thr49 the chain is on the cytoplasmic side. 2 helical membrane passes run Val50–Ala70 and Trp71–Val91. Residues Thr92–Tyr138 lie on the Cytoplasmic side of the membrane. The chain crosses the membrane as a helical span at residues Leu139 to Ile159. Over Lys160–His175 the chain is Extracellular. The chain crosses the membrane as a helical span at residues Met176–Pro196. Over Asp197–Gln200 the chain is Cytoplasmic. Residues Ile201–Ala221 form a helical membrane-spanning segment. The Extracellular segment spans residues Leu222 to Arg253. The chain crosses the membrane as a helical span at residues Thr254 to Ile274. Over Gln275–Lys293 the chain is Cytoplasmic. Residues Ile294–Phe314 traverse the membrane as a helical segment. The Extracellular portion of the chain corresponds to Gly315–Ala340. The chain crosses the membrane as a helical span at residues Ala341–Ile361. Residues Glu362–Arg396 are Cytoplasmic-facing. The chain crosses the membrane as a helical span at residues Met397–Phe417. Residues Asn418–Asp419 are Extracellular-facing. Residues Val420–Met440 traverse the membrane as a helical segment. The Cytoplasmic portion of the chain corresponds to Tyr441 to Gln458. Residues Met459–Val479 traverse the membrane as a helical segment. Residues Met480–Tyr493 are Extracellular-facing.

Belongs to the amino acid/polyamine transporter 2 family. Amino acid/auxin permease (AAAP) (TC 2.A.18.2) subfamily. In terms of tissue distribution, highly expressed in developing pods. Found in the vascular strands of siliques, cotyledons, leaves and roots, in the inner phloem of stems, and in the funiculi. Lower levels of expression in flowers. Not expressed in seeds.

The protein localises to the cell membrane. Inhibited by diethylpyrocarbonate (DEPC). Amino acid-proton symporter. Stereospecific transporter with a broad specificity for histidine, arginine, glutamate and neutral amino acids, favoring small amino acids such as alanine, asparagine and glutamine. Also accepts large aromatic residues such as phenlalanine or tyrosine. Has a much higher affinity for basic amino acids as compared with AAP1. May function in xylem-to-phloem transfer and in uptake of amino acids assimilated in the green silique tissue. This Arabidopsis thaliana (Mouse-ear cress) protein is Amino acid permease 2 (AAP2).